Here is a 329-residue protein sequence, read N- to C-terminus: Phenylalanine--tRNA ligase alpha subunit (329 aa).

Residue E254 coordinates Mg(2+).

Belongs to the class-II aminoacyl-tRNA synthetase family. Phe-tRNA synthetase alpha subunit type 1 subfamily. Tetramer of two alpha and two beta subunits. Requires Mg(2+) as cofactor.

It localises to the cytoplasm. The catalysed reaction is tRNA(Phe) + L-phenylalanine + ATP = L-phenylalanyl-tRNA(Phe) + AMP + diphosphate + H(+). The chain is Phenylalanine--tRNA ligase alpha subunit from Histophilus somni (strain 129Pt) (Haemophilus somnus).